Reading from the N-terminus, the 142-residue chain is Large ribosomal subunit protein uL13 (142 aa).

It belongs to the universal ribosomal protein uL13 family. Part of the 50S ribosomal subunit.

Functionally, this protein is one of the early assembly proteins of the 50S ribosomal subunit, although it is not seen to bind rRNA by itself. It is important during the early stages of 50S assembly. The protein is Large ribosomal subunit protein uL13 of Shigella boydii serotype 18 (strain CDC 3083-94 / BS512).